Here is a 426-residue protein sequence, read N- to C-terminus: Adenylosuccinate synthetase (426 aa).

GTP contacts are provided by residues 12–18 (GDEGKGK) and 40–42 (GHT). Catalysis depends on Asp13, which acts as the Proton acceptor. Mg(2+) contacts are provided by Asp13 and Gly40. IMP contacts are provided by residues 13-16 (DEGK), 38-41 (NAGH), Thr131, Arg145, Gln226, Thr241, and Arg305. The Proton donor role is filled by His41. 301–307 (ATTGRKR) lines the substrate pocket. GTP-binding positions include Arg307, 333–335 (KLD), and 415–417 (SVG).

The protein belongs to the adenylosuccinate synthetase family. In terms of assembly, homodimer. Mg(2+) is required as a cofactor.

Its subcellular location is the cytoplasm. The catalysed reaction is IMP + L-aspartate + GTP = N(6)-(1,2-dicarboxyethyl)-AMP + GDP + phosphate + 2 H(+). It participates in purine metabolism; AMP biosynthesis via de novo pathway; AMP from IMP: step 1/2. In terms of biological role, plays an important role in the de novo pathway of purine nucleotide biosynthesis. Catalyzes the first committed step in the biosynthesis of AMP from IMP. In Nitratidesulfovibrio vulgaris (strain ATCC 29579 / DSM 644 / CCUG 34227 / NCIMB 8303 / VKM B-1760 / Hildenborough) (Desulfovibrio vulgaris), this protein is Adenylosuccinate synthetase.